Reading from the N-terminus, the 154-residue chain is Anti-sigma-E factor RseA (154 aa).

T39 is subject to Phosphothreonine; by PknB. H66, C70, and C73 together coordinate Zn(2+). The tract at residues 104–154 is disordered; that stretch reads SEIPRCPPEGPSKGSSGGSSQGPPDGAAAGFGDRFADGDGGNRGRQSRVRR. Over residues 124 to 136 the composition is skewed to low complexity; the sequence is QGPPDGAAAGFGD.

Belongs to the zinc-associated anti-sigma factor (ZAS) superfamily. As to quaternary structure, interacts with cognate ECF RNA polymerase sigma factor SigE under reducing conditions; this inhibits the interaction of SigE with the RNA polymerase catalytic core. Requires Zn(2+) as cofactor. Phosphorylated by PknB on Thr-39; can be dephosphorylated (at least in vitro) by PstP. Phosphorylation is the signal for subsequent degradation by the ClpC1-ClpP2 complex. Post-translationally, degraded following vancomycin treatment (surface stress) by a ClpC1-ClpP2 complex.

Its subcellular location is the cytoplasm. An anti-sigma factor for extracytoplasmic function (ECF) sigma factor SigE. ECF sigma factors are held in an inactive form by an anti-sigma factor. This chain is Anti-sigma-E factor RseA (rseA), found in Mycobacterium tuberculosis (strain ATCC 25618 / H37Rv).